The sequence spans 30 residues: Varv peptide H (30 aa).

The segment at residues 1-30 is a cross-link (cyclopeptide (Gly-Asn)); that stretch reads GLPVCGETCFGGTCNTPGCSCETWPVCSRN. Intrachain disulfides connect Cys-5–Cys-19, Cys-9–Cys-21, and Cys-14–Cys-27.

This is a cyclic peptide.

Probably participates in a plant defense mechanism. In Viola arvensis (European field pansy), this protein is Varv peptide H.